Reading from the N-terminus, the 151-residue chain is Ribonuclease H (151 aa).

In terms of domain architecture, RNase H type-1 spans 5 to 146; sequence ALPHVTIFTD…ADQLAREGVA (142 aa). Residues Asp-14, Glu-52, Asp-74, and Asp-138 each coordinate Mg(2+).

This sequence belongs to the RNase H family. As to quaternary structure, monomer. It depends on Mg(2+) as a cofactor.

The protein resides in the cytoplasm. The enzyme catalyses Endonucleolytic cleavage to 5'-phosphomonoester.. In terms of biological role, endonuclease that specifically degrades the RNA of RNA-DNA hybrids. This is Ribonuclease H from Nitrobacter hamburgensis (strain DSM 10229 / NCIMB 13809 / X14).